Reading from the N-terminus, the 390-residue chain is Homeobox protein Meis1 (390 aa).

Residues 108 to 192 enclose the MEIS N-terminal domain; sequence GGDVCSSESF…IDLVIDDREG (85 aa). Positions 190-202 are enriched in basic and acidic residues; that stretch reads REGGSKSDSEDVT. The disordered stretch occupies residues 190–279; it reads REGGSKSDSE…KKRHKKRGIF (90 aa). Over residues 203–213 the composition is skewed to polar residues; it reads RSANLTDQPSW. Residues 272 to 334 constitute a DNA-binding region (homeobox; TALE-type); the sequence is RHKKRGIFPK…NARRRIVQPM (63 aa). The interval 299 to 329 is interaction with DNA; that stretch reads YPSEEQKKQLAQDTGLTILQVNNWFINARRR. The segment at 335 to 390 is required for transcriptional activation; it reads IDQSNRAVSQGTPYNPDGQPMGGFVMDGQQHMGIRAPGPMSGMGMNMGMEGQWHYM.

Belongs to the TALE/MEIS homeobox family. As to quaternary structure, interacts with the N-terminal region of PBX1 to form a heterodimer which binds DNA including a cAMP-responsive sequence in CYP17. Also forms heterodimers with PBX2. Forms heterotrimers with PBX1 or PBX2 and a number of HOX proteins including HOXA9, HOXD4 and HOXD9 where it acts as a non-DNA-binding partner. Also forms heterotrimers with PBX1 and HOX proteins including HOXD9 and HOXD10 where PBX1 is the non-DNA-binding partner. Heterodimer with DLX3. Heterodimer with HOXB13. In terms of tissue distribution, expressed at high levels in the lung with lower levels detected in the heart and brain. Expressed in pancreatic islets (beta-cells and non-beta-cells).

Its subcellular location is the nucleus. Acts as a transcriptional regulator of PAX6. Also acts as a transcriptional activator of PF4 in complex with PBX1 or PBX2. Required for hematopoiesis, megakaryocyte lineage development and vascular patterning. May function as a cofactor for HOXA7 and HOXA9 in the induction of myeloid leukemias. This chain is Homeobox protein Meis1 (Meis1), found in Mus musculus (Mouse).